The sequence spans 510 residues: Inositol-3-phosphate synthase (510 aa).

NAD(+)-binding residues include Gly-70, Gly-71, Asn-72, Asn-73, Asp-143, Ile-180, Gln-190, Arg-193, Thr-230, Ala-231, Asn-232, Thr-233, Gly-281, Ser-282, Asp-306, Ser-309, Asn-340, Asn-341, Asp-342, Lys-355, Gly-393, Asp-394, Asp-422, and Ser-423.

It belongs to the myo-inositol 1-phosphate synthase family. Requires NAD(+) as cofactor.

The protein resides in the cytoplasm. It is found in the cytosol. Its subcellular location is the nucleus. The enzyme catalyses D-glucose 6-phosphate = 1D-myo-inositol 3-phosphate. It participates in polyol metabolism; myo-inositol biosynthesis; myo-inositol from D-glucose 6-phosphate: step 1/2. Key enzyme in myo-inositol biosynthesis pathway that catalyzes the conversion of glucose 6-phosphate to 1-myo-inositol 1-phosphate in a NAD-dependent manner. In Hordeum vulgare (Barley), this protein is Inositol-3-phosphate synthase.